The sequence spans 530 residues: Negative elongation factor A (530 aa).

Residues Trp89–Leu248 form the HDAg domain. Residues Arg125–Gln188 are NELF-C/D-binding. Position 157 is a phosphothreonine (Thr157). The tract at residues Leu189 to Leu248 is RNAPII-binding. Disordered stretches follow at residues Pro213–Leu248, Gly266–Ala296, and Ser312–Thr409. Phosphoserine is present on residues Ser225 and Ser233. The segment covering Ser225 to Arg238 has biased composition (polar residues). Phosphothreonine is present on Thr277. The span at Thr277 to Thr291 shows a compositional bias: basic and acidic residues. Low complexity predominate over residues Ser315–Ser341. A Phosphoserine modification is found at Ser363.

The protein belongs to the NELF-A family. As to quaternary structure, the NELF complex is composed of NELFA, NELFB, NELFCD and NELFE; NELFA and NELFCD form a stable subcomplex that binds to the N-terminus of NELFB. In vitro, the NELFA:NELFCD subcomplex binds to ssDNA and ssRNA in a sequence- and structure-dependent manner. Interacts with the RNA polymerase II complex when it is not phosphorylated by P-TEFb. Interacts with NELFB. As to expression, ubiquitous. Expressed in brain, heart, spleen, lung, liver, muscle, kidney and testis. Already expressed in 7 dpc embryos.

It is found in the nucleus. In terms of biological role, essential component of the NELF complex, a complex that negatively regulates the elongation of transcription by RNA polymerase II. The NELF complex, which acts via an association with the DSIF complex and causes transcriptional pausing, is counteracted by the P-TEFb kinase complex. In Mus musculus (Mouse), this protein is Negative elongation factor A (Nelfa).